Consider the following 190-residue polypeptide: Peptidyl-tRNA hydrolase (190 aa).

Residue Tyr14 coordinates tRNA. The active-site Proton acceptor is His19. The tRNA site is built by Tyr64, Asn66, and Asn112.

The protein belongs to the PTH family. Monomer.

The protein resides in the cytoplasm. The enzyme catalyses an N-acyl-L-alpha-aminoacyl-tRNA + H2O = an N-acyl-L-amino acid + a tRNA + H(+). Functionally, hydrolyzes ribosome-free peptidyl-tRNAs (with 1 or more amino acids incorporated), which drop off the ribosome during protein synthesis, or as a result of ribosome stalling. Catalyzes the release of premature peptidyl moieties from peptidyl-tRNA molecules trapped in stalled 50S ribosomal subunits, and thus maintains levels of free tRNAs and 50S ribosomes. This Chlorobium phaeobacteroides (strain DSM 266 / SMG 266 / 2430) protein is Peptidyl-tRNA hydrolase.